The sequence spans 96 residues: UPF0235 protein YggU (96 aa).

This sequence belongs to the UPF0235 family.

The polypeptide is UPF0235 protein YggU (Salmonella typhimurium (strain LT2 / SGSC1412 / ATCC 700720)).